We begin with the raw amino-acid sequence, 327 residues long: MSHLAELVASAKAAISQASDVAALDNVRVEYLGKKGHLTLQMTTLRELPPEERPAAGAVINEAKEQVQQALNARKAELESAALNARLAADTIDVSLPGRRIENGGLHPVTRTIDRIESFFGELGFTVATGPEIEDDYHNFDALNIPGHHPARADHDTFWFDATRLLRTQTSGVQIRTMKAQQPPIRIIAPGRVYRNDYDQTHTPMFHQMEGLIVDTNISFTNLKGTLHDFLRNFFEEDLQIRFRPSYFPFTEPSAEVDVMGKNGKWLEVLGCGMVHPNVLRNVGIDPEVYSGFAFGMGMERLTMLRYGVTDLRSFFENDLRFLKQFK.

E252 is a binding site for Mg(2+).

Belongs to the class-II aminoacyl-tRNA synthetase family. Phe-tRNA synthetase alpha subunit type 1 subfamily. In terms of assembly, tetramer of two alpha and two beta subunits. The cofactor is Mg(2+).

The protein resides in the cytoplasm. It catalyses the reaction tRNA(Phe) + L-phenylalanine + ATP = L-phenylalanyl-tRNA(Phe) + AMP + diphosphate + H(+). This Shigella dysenteriae serotype 1 (strain Sd197) protein is Phenylalanine--tRNA ligase alpha subunit.